The following is a 78-amino-acid chain: MSRVCQVTGKRPVTGNNRSHALNATKRRFLPNLHSHRFWVESEKRFVTLRVSAKGMRIIDKKGIETVLSELRARGEKY.

The protein belongs to the bacterial ribosomal protein bL28 family.

The chain is Large ribosomal subunit protein bL28 from Salmonella choleraesuis (strain SC-B67).